A 612-amino-acid polypeptide reads, in one-letter code: MFS siderochrome iron transporter B (612 aa).

At 1 to 86 (MLHVLSVGPS…GAQAGVKKIE (86 aa)) the chain is on the cytoplasmic side. Positions 55–78 (DKEAAHAPANAETNNEEANPSDGA) are disordered. Positions 60–72 (HAPANAETNNEEA) are enriched in low complexity. The helical transmembrane segment at 87-104 (AVTLSWTRGTAIWFLTLV) threads the bilayer. The Extracellular portion of the chain corresponds to 105 to 127 (NDFRLSMYTSLNAYATSSFLGHS). The chain crosses the membrane as a helical span at residues 128–148 (LLTVINIVSYVMGGSVYIPMA). Residues 149-156 (KALDLWGR) are Cytoplasmic-facing. Residues 157–177 (AEGFLLMTFFCILGLILLASS) traverse the membrane as a helical segment. The Extracellular portion of the chain corresponds to 178 to 187 (QNLPTYCAGQ). Residues 188–208 (VFYKVGFGGLSYTWNVLAADV) traverse the membrane as a helical segment. At 209–215 (TNLRNRG) the chain is on the cytoplasmic side. The chain crosses the membrane as a helical span at residues 216 to 236 (LAFAFTSSPALISAFAGSKAA). Residues 237–246 (SDLLAHSTWR) lie on the Extracellular side of the membrane. The helical transmembrane segment at 247-267 (WGFGMWAIILPVVALPIYGLL) threads the bilayer. Topologically, residues 268-302 (AYHLRQAEKKGVLVKETRDWSITPKTVWWAIMEFD) are cytoplasmic. Residues 303–323 (LPGVLLFAGGFVIFLLPFTLA) traverse the membrane as a helical segment. At 324 to 334 (ATAPHGYQTDY) the chain is on the extracellular side. The chain crosses the membrane as a helical span at residues 335-355 (IIAMITLGLALIIAFGFYEML). Residues 356-370 (VAPVPFLNYKFLIDR) are Cytoplasmic-facing. A helical membrane pass occupies residues 371–393 (TVLGACLLDMTYQVSYYCYASYL). Residues 394–409 (PSFLQVVYELDVATAG) are Extracellular-facing. A helical transmembrane segment spans residues 410-430 (YVTNTFSVVSFVFLFFAGWLI). Residues 431-435 (RWTGR) lie on the Cytoplasmic side of the membrane. The helical transmembrane segment at 436–456 (FKWILWVCVPLYIFGLGLMIH) threads the bilayer. The Extracellular segment spans residues 457–463 (FRQPGGY). Residues 464–484 (IGYIVMCEIFFSVAGSVFILC) traverse the membrane as a helical segment. The Cytoplasmic segment spans residues 485-498 (VQLAVLASVDHQHV). Residues 499 to 519 (AAVLALLFVMGSIGGSIGSAI) traverse the membrane as a helical segment. Residues 520–575 (CGAIWTSTFLSRLERNLPASAMPDLSLIYSSLPTQLSYPVGSATRTAIVEAYGYAQ) lie on the Extracellular side of the membrane. Residues 576-596 (ARMLIAGTAFMVLGFIWVGMM) traverse the membrane as a helical segment. Residues 597–612 (RNLNVKNMTQTKGNVV) lie on the Cytoplasmic side of the membrane.

It belongs to the major facilitator superfamily.

Its subcellular location is the cell tip. It is found in the cytoplasmic vesicle membrane. The protein resides in the cell membrane. Its function is as follows. Major facilitator transporter involved in triacetylfusarinine C (TAFC) uptake. Can also transport ferricrocin and coprogen, but not ferrichrysin. MirB plays a crucial role for virulence in a murine model of pulmonary aspergillosis, indicating that TAFC-mediated iron uptake plays a dominant role during infection. In Aspergillus fumigatus (strain ATCC MYA-4609 / CBS 101355 / FGSC A1100 / Af293) (Neosartorya fumigata), this protein is MFS siderochrome iron transporter B.